The sequence spans 101 residues: Anti-sigma factor RshA (101 aa).

An inhibits SigH sigma factor activity region spans residues 9–15; that stretch reads DAHADHD. C23 contacts iron-sulfur cluster. Inhibits SigH sigma factor activity regions lie at residues 28–34 and 38–44; these read AEVWTLL and CTPETRE. Iron-sulfur cluster contacts are provided by H49, C53, and C56. The residue at position 94 (T94) is a Phosphothreonine.

It belongs to the zinc-associated anti-sigma factor (ZAS) superfamily. As to quaternary structure, interacts with cognate sigma factor SigH under reducing conditions. Binding inhibits the interaction of SigH with the RNA polymerase catalytic core. Requires iron-sulfur cluster as cofactor. Post-translationally, phosphorylated, probably by PknB. Phosphorylation decreases interaction with SigH, leading to increased SigH-mediated transcription.

An redox-regulated anti-sigma factor for extracytoplasmic function (ECF) sigma factor SigH. ECF sigma factors are held in an inactive form by a cognate anti-sigma factor. RshA and some peptides derived from it inhibit the sigma factor activity of SigH. Probably releases SigH during oxidative stress. The polypeptide is Anti-sigma factor RshA (rshA) (Mycobacterium tuberculosis (strain CDC 1551 / Oshkosh)).